The primary structure comprises 205 residues: Large ribosomal subunit protein bL21m (205 aa).

A mitochondrion-targeting transit peptide spans 1-39; the sequence is MAASSLTVTLGRLASACSHSILRPSGPGAASLWSASRRF.

The protein belongs to the bacterial ribosomal protein bL21 family. In terms of assembly, component of the mitochondrial large ribosomal subunit (mt-LSU). Mature mammalian 55S mitochondrial ribosomes consist of a small (28S) and a large (39S) subunit. The 28S small subunit contains a 12S ribosomal RNA (12S mt-rRNA) and 30 different proteins. The 39S large subunit contains a 16S rRNA (16S mt-rRNA), a copy of mitochondrial valine transfer RNA (mt-tRNA(Val)), which plays an integral structural role, and 52 different proteins.

It is found in the mitochondrion. This chain is Large ribosomal subunit protein bL21m (MRPL21), found in Homo sapiens (Human).